Reading from the N-terminus, the 523-residue chain is Cytoplasmic dynein 1 light intermediate chain 1 (523 aa).

Residues methionine 1 to glycine 45 form a disordered region. Glycine 74–threonine 81 contributes to the ATP binding site. At serine 207 the chain carries Phosphoserine. At threonine 213 the chain carries Phosphothreonine. 2 disordered regions span residues proline 387–methionine 434 and glycine 457–serine 523. Serine 398 and serine 405 each carry phosphoserine. Residue threonine 408 is modified to Phosphothreonine. Serine 412, serine 419, serine 421, and serine 427 each carry phosphoserine. A compositionally biased stretch (low complexity) spans serine 412–serine 421. Over residues serine 458–alanine 473 the composition is skewed to gly residues. Residues glycine 474–alanine 483 are compositionally biased toward low complexity. Phosphoserine is present on residues serine 486 and serine 510. Threonine 512 and threonine 513 each carry phosphothreonine. Serine 516 bears the Phosphoserine mark.

It belongs to the dynein light intermediate chain family. As to quaternary structure, homodimer. The cytoplasmic dynein 1 complex consists of two catalytic heavy chains (HCs) and a number of non-catalytic subunits presented by intermediate chains (ICs), light intermediate chains (LICs) and light chains (LCs); the composition seems to vary in respect to the IC, LIC and LC composition. The heavy chain homodimer serves as a scaffold for the probable homodimeric assembly of the respective non-catalytic subunits. The ICs and LICs bind directly to the HC dimer and the LCs assemble on the IC dimer. Self-associates. Interacts with DYNC1H1; DYNC1LI1 and DYNC1LI2 bind mutually exclusive to DYNC1H1. Interacts with PCNT. Forms a complex with RAB11FIP3 and RAB11A1; the interaction between DYNC1LI1 and RAB11FIP3 is direct and induces DYNC1LI1 localization onto endosomal membrane; the complex regulates endocytic trafficking. Interacts with RUFY3. In terms of processing, phosphorylated during mitosis but not in interphase.

Its subcellular location is the cytoplasm. The protein resides in the chromosome. It localises to the centromere. It is found in the kinetochore. The protein localises to the cytoskeleton. Its subcellular location is the spindle pole. The protein resides in the recycling endosome membrane. Acts as one of several non-catalytic accessory components of the cytoplasmic dynein 1 complex that are thought to be involved in linking dynein to cargos and to adapter proteins that regulate dynein function. Cytoplasmic dynein 1 acts as a motor for the intracellular retrograde motility of vesicles and organelles along microtubules. May play a role in binding dynein to membranous organelles or chromosomes. Probably involved in the microtubule-dependent transport of pericentrin. Is required for progress through the spindle assembly checkpoint. The phosphorylated form appears to be involved in the selective removal of MAD1L1 and MAD1L2 but not BUB1B from kinetochores. Forms a functional Rab11/RAB11FIP3/dynein complex onto endosomal membrane that regulates the movement of peripheral sorting endosomes (SE) along microtubule tracks toward the microtubule organizing center/centrosome, generating the endosomal recycling compartment (ERC). The sequence is that of Cytoplasmic dynein 1 light intermediate chain 1 (Dync1li1) from Rattus norvegicus (Rat).